The sequence spans 355 residues: UDP-N-acetylglucosamine--N-acetylmuramyl-(pentapeptide) pyrophosphoryl-undecaprenol N-acetylglucosamine transferase (355 aa).

UDP-N-acetyl-alpha-D-glucosamine is bound by residues 15–17, N127, R163, S191, I244, 263–268, and Q288; these read TGG and ALTVSE.

The protein belongs to the glycosyltransferase 28 family. MurG subfamily.

The protein localises to the cell inner membrane. It catalyses the reaction di-trans,octa-cis-undecaprenyl diphospho-N-acetyl-alpha-D-muramoyl-L-alanyl-D-glutamyl-meso-2,6-diaminopimeloyl-D-alanyl-D-alanine + UDP-N-acetyl-alpha-D-glucosamine = di-trans,octa-cis-undecaprenyl diphospho-[N-acetyl-alpha-D-glucosaminyl-(1-&gt;4)]-N-acetyl-alpha-D-muramoyl-L-alanyl-D-glutamyl-meso-2,6-diaminopimeloyl-D-alanyl-D-alanine + UDP + H(+). Its pathway is cell wall biogenesis; peptidoglycan biosynthesis. Cell wall formation. Catalyzes the transfer of a GlcNAc subunit on undecaprenyl-pyrophosphoryl-MurNAc-pentapeptide (lipid intermediate I) to form undecaprenyl-pyrophosphoryl-MurNAc-(pentapeptide)GlcNAc (lipid intermediate II). The chain is UDP-N-acetylglucosamine--N-acetylmuramyl-(pentapeptide) pyrophosphoryl-undecaprenol N-acetylglucosamine transferase from Escherichia coli (strain K12 / MC4100 / BW2952).